The chain runs to 173 residues: RNA pyrophosphohydrolase (173 aa).

One can recognise a Nudix hydrolase domain in the interval 6–149 (GFRANVGIIL…KRGVYRRALQ (144 aa)). The Nudix box signature appears at 38 to 59 (GGIDRGETPMDAMYRELWEEVG).

It belongs to the Nudix hydrolase family. RppH subfamily. It depends on a divalent metal cation as a cofactor.

In terms of biological role, accelerates the degradation of transcripts by removing pyrophosphate from the 5'-end of triphosphorylated RNA, leading to a more labile monophosphorylated state that can stimulate subsequent ribonuclease cleavage. This is RNA pyrophosphohydrolase from Psychrobacter arcticus (strain DSM 17307 / VKM B-2377 / 273-4).